Reading from the N-terminus, the 842-residue chain is 9-beta-pimara-7,15-diene synthase, chloroplastic (842 aa).

The transit peptide at 1–56 (MASPMEAVARSSLVLAPRRRRALGLLPAAAAAAPFVLDCRRRHNGGMRRPHVSFAC) directs the protein to the chloroplast. Positions 591, 595, 735, 739, and 743 each coordinate Mg(2+). The DDXXD motif motif lies at 591-595 (DDFFD).

It belongs to the terpene synthase family. Mg(2+) is required as a cofactor. In terms of tissue distribution, expressed in roots.

It localises to the plastid. The protein localises to the chloroplast. The enzyme catalyses 9alpha-copalyl diphosphate = 9beta-pimara-7,15-diene + diphosphate. Its function is as follows. Involved in the biosynthesis of momilactone A and B phytoalexins. Catalyzes the conversion of syn-copalyl diphosphate to the phytoalexin precursor syn-pimara-7,15-diene. In Oryza sativa subsp. japonica (Rice), this protein is 9-beta-pimara-7,15-diene synthase, chloroplastic.